Consider the following 429-residue polypeptide: Enolase (429 aa).

Gln163 contacts (2R)-2-phosphoglycerate. The Proton donor role is filled by Glu205. 3 residues coordinate Mg(2+): Asp242, Glu285, and Asp312. 4 residues coordinate (2R)-2-phosphoglycerate: Lys337, Arg366, Ser367, and Lys388. Lys337 (proton acceptor) is an active-site residue.

It belongs to the enolase family. Mg(2+) serves as cofactor.

Its subcellular location is the cytoplasm. It is found in the secreted. It localises to the cell surface. The catalysed reaction is (2R)-2-phosphoglycerate = phosphoenolpyruvate + H2O. It functions in the pathway carbohydrate degradation; glycolysis; pyruvate from D-glyceraldehyde 3-phosphate: step 4/5. Its function is as follows. Catalyzes the reversible conversion of 2-phosphoglycerate (2-PG) into phosphoenolpyruvate (PEP). It is essential for the degradation of carbohydrates via glycolysis. In Azoarcus sp. (strain BH72), this protein is Enolase.